Consider the following 600-residue polypeptide: CoA ligase FVEG_12633 (600 aa).

ATP contacts are provided by residues 170-174, histidine 214, 321-323, and 342-343; these read TSGTT, AAL, and ER. The segment at 241 to 342 is SBD1; it reads NSVWTRLAAP…QLTGGNVLLE (102 aa). Residues 343–420 are SBD2; sequence RYGMTEVGMA…LRGPTVFTGY (78 aa). Substrate is bound at residue methionine 346. 4 residues coordinate ATP: threonine 347, aspartate 441, arginine 471, and lysine 564. An oxalate-binding site is contributed by lysine 564.

Belongs to the ATP-dependent AMP-binding enzyme family.

In terms of biological role, coA ligase; part of the Fusarium detoxification of benzoxazolinone cluster 2 (FDB2) involved in the degradation of benzoxazolinones produced by the host plant. Maize, wheat, and rye produce the 2 benzoxazinone phytoanticipins 2,4-dihy-droxy-7-methoxy-1,4-benzoxazin-3-one (DIMBOA) and 2,4-dihydroxy-1,4-benzoxazin-3-one (DIBOA) that, due to their inherent instability once released, spontaneously degrade to the more stable corresponding benzoxazolinones, 6-methoxy-2-benzoxazolinone (MBOA) and 2-benzoxazolinone (BOA), respectively. The first step in the detoxification of benzoxazolinones involves the hydrolysis of the cyclic ester bond of benzoxazolinones by the FDB1 cluster gamma-lactamase MBL1 to aminophenols. MBL1 is able to convert BOA into 2-aminophenol (2-AP), as well as MBOA into 5-methoxy-2-aminophenol (2-AMP). The FDB2 cluster N-malonyltransferase FDB2/NAT1 then metabolizes aminophenols via N-malonylation to non-toxic malonamic acids. FDB2/NAT1 converts 2-AP into N-(2-hydroxyphenyl) malonamic acid (HPMA) and 2-AMP into N-(2-hydroxy-4-methoxyphenyl) malonamic acid (HMPMA). The duplicated dienlactone hydrolases DLH1 and DLH2 may provide redundant function for hydrolyzing the lactone moiety in the BOA molecule. The roles of the amidases an other enzymes encoded by the 2 FDB clusters have not been identified so far. This Gibberella moniliformis (strain M3125 / FGSC 7600) (Maize ear and stalk rot fungus) protein is CoA ligase FVEG_12633.